The following is a 240-amino-acid chain: tRNA (guanine-N(1)-)-methyltransferase (240 aa).

S-adenosyl-L-methionine contacts are provided by residues Gly110 and 129–134; that span reads LGDFVL.

The protein belongs to the RNA methyltransferase TrmD family. As to quaternary structure, homodimer.

Its subcellular location is the cytoplasm. The enzyme catalyses guanosine(37) in tRNA + S-adenosyl-L-methionine = N(1)-methylguanosine(37) in tRNA + S-adenosyl-L-homocysteine + H(+). Specifically methylates guanosine-37 in various tRNAs. The chain is tRNA (guanine-N(1)-)-methyltransferase from Clostridium botulinum (strain ATCC 19397 / Type A).